The following is a 151-amino-acid chain: Flagellar assembly factor FliW (151 aa).

It belongs to the FliW family. As to quaternary structure, interacts with translational regulator CsrA and flagellin(s).

It is found in the cytoplasm. Functionally, acts as an anti-CsrA protein, binds CsrA and prevents it from repressing translation of its target genes, one of which is flagellin. Binds to flagellin and participates in the assembly of the flagellum. This Natranaerobius thermophilus (strain ATCC BAA-1301 / DSM 18059 / JW/NM-WN-LF) protein is Flagellar assembly factor FliW.